Reading from the N-terminus, the 122-residue chain is Basic phospholipase A2 (122 aa).

Disulfide bonds link Cys-26–Cys-115, Cys-28–Cys-44, Cys-43–Cys-95, Cys-49–Cys-122, Cys-50–Cys-88, Cys-57–Cys-81, and Cys-75–Cys-86. Tyr-27, Gly-29, and Gly-31 together coordinate Ca(2+). His-47 is a catalytic residue. Asp-48 contributes to the Ca(2+) binding site. Residue Asp-89 is part of the active site.

It belongs to the phospholipase A2 family. Group II subfamily. D49 sub-subfamily. In terms of assembly, homodimer. Ca(2+) is required as a cofactor. In terms of tissue distribution, expressed by the venom gland.

The protein resides in the secreted. The enzyme catalyses a 1,2-diacyl-sn-glycero-3-phosphocholine + H2O = a 1-acyl-sn-glycero-3-phosphocholine + a fatty acid + H(+). In terms of biological role, snake venom phospholipase A2 (PLA2) that inhibits neuromuscular transmission by blocking acetylcholine release from the nerve termini. PLA2 catalyzes the calcium-dependent hydrolysis of the 2-acyl groups in 3-sn-phosphoglycerides. The sequence is that of Basic phospholipase A2 from Gloydius blomhoffii (Mamushi).